Here is a 154-residue protein sequence, read N- to C-terminus: Endoribonuclease YbeY (154 aa).

Zn(2+) contacts are provided by His116, His120, and His126.

The protein belongs to the endoribonuclease YbeY family. The cofactor is Zn(2+).

The protein localises to the cytoplasm. In terms of biological role, single strand-specific metallo-endoribonuclease involved in late-stage 70S ribosome quality control and in maturation of the 3' terminus of the 16S rRNA. This Buchnera aphidicola subsp. Baizongia pistaciae (strain Bp) protein is Endoribonuclease YbeY.